We begin with the raw amino-acid sequence, 138 residues long: HTH-type transcriptional regulator CymR (138 aa).

In terms of domain architecture, HTH rrf2-type spans K2–S125. The H-T-H motif DNA-binding region spans L28 to N51.

In terms of assembly, homodimer. Forms homotetramers at higher concentrations of protein. Forms CymR(2):CysK(2) or CymR(4):CysK(4) complexes in the absence of O-acetylserine.

Functionally, master repressor of cysteine metabolism in B.subtilis. Controls the expression of genes involved either in cysteine synthesis from sulfide (cysK), sulfonates (ssu), or methionine (mccAB) or in cystine uptake (tcyP). Activity of CymR is positively regulated by CysK in response to cysteine availability. When cysteine is present, the pool of O-acetylserine (OAS) is low, which leads to the formation of a CymR-CysK complex and transcriptional repression of the CymR regulon occurs. In the absence of cysteine, the OAS pool is high and the CymR-CysK complex is mostly dissociated, leading to a faster dissociation of CymR from its DNA targets and the lifting of CymR-dependent repression. This is HTH-type transcriptional regulator CymR (cymR) from Bacillus subtilis (strain 168).